We begin with the raw amino-acid sequence, 101 residues long: Small ribosomal subunit protein uS14 (101 aa).

Positions 1–10 (MAKKSSIEKN) are enriched in basic and acidic residues. Residues 1–23 (MAKKSSIEKNNRRRRMNRNAAAK) form a disordered region. Residues 11 to 23 (NRRRRMNRNAAAK) show a composition bias toward basic residues.

The protein belongs to the universal ribosomal protein uS14 family. As to quaternary structure, part of the 30S ribosomal subunit. Contacts proteins S3 and S10.

Its function is as follows. Binds 16S rRNA, required for the assembly of 30S particles and may also be responsible for determining the conformation of the 16S rRNA at the A site. The sequence is that of Small ribosomal subunit protein uS14 from Nitrobacter winogradskyi (strain ATCC 25391 / DSM 10237 / CIP 104748 / NCIMB 11846 / Nb-255).